A 251-amino-acid chain; its full sequence is tRNA (guanine-N(1)-)-methyltransferase (251 aa).

Residues G122 and 142–147 (IGDYVL) contribute to the S-adenosyl-L-methionine site. A disordered region spans residues 226–251 (RARRPDLFATRPQPNRQKPPKNTTDG). Positions 237 to 251 (PQPNRQKPPKNTTDG) are enriched in polar residues.

Belongs to the RNA methyltransferase TrmD family. As to quaternary structure, homodimer.

The protein resides in the cytoplasm. The catalysed reaction is guanosine(37) in tRNA + S-adenosyl-L-methionine = N(1)-methylguanosine(37) in tRNA + S-adenosyl-L-homocysteine + H(+). Specifically methylates guanosine-37 in various tRNAs. The sequence is that of tRNA (guanine-N(1)-)-methyltransferase from Rhodopseudomonas palustris (strain BisB18).